Consider the following 1045-residue polypeptide: Probable sucrose-phosphate synthase (1045 aa).

2 stretches are compositionally biased toward basic and acidic residues: residues 93-115 and 124-137; these read ENEE…REAT and EGEK…DSTR. Disordered stretches follow at residues 93–141, 222–243, and 662–692; these read ENEE…PRLP, WSYG…DDDD, and IASS…SDSL. A compositionally biased stretch (low complexity) spans 664 to 674; that stretch reads SSRQRQPQWQR.

It belongs to the glycosyltransferase 1 family. As to quaternary structure, homodimer or homotetramer. As to expression, predominantly active in tap root.

It catalyses the reaction beta-D-fructose 6-phosphate + UDP-alpha-D-glucose = sucrose 6(F)-phosphate + UDP + H(+). It functions in the pathway glycan biosynthesis; sucrose biosynthesis; sucrose from D-fructose 6-phosphate and UDP-alpha-D-glucose: step 1/2. Its activity is regulated as follows. Activity is regulated by phosphorylation and moderated by concentration of metabolites and light. Plays a role in photosynthetic sucrose synthesis by catalyzing the rate-limiting step of sucrose biosynthesis from UDP-glucose and fructose- 6-phosphate. Involved in the regulation of carbon partitioning in the leaves of plants. May regulate the synthesis of sucrose and therefore play a major role as a limiting factor in the export of photoassimilates out of the leaf. Plays a role for sucrose availability that is essential for plant growth and fiber elongation. The sequence is that of Probable sucrose-phosphate synthase (SPS) from Beta vulgaris (Sugar beet).